Here is an 89-residue protein sequence, read N- to C-terminus: Small ribosomal subunit protein uS15 (89 aa).

It belongs to the universal ribosomal protein uS15 family. Part of the 30S ribosomal subunit. Forms a bridge to the 50S subunit in the 70S ribosome, contacting the 23S rRNA.

One of the primary rRNA binding proteins, it binds directly to 16S rRNA where it helps nucleate assembly of the platform of the 30S subunit by binding and bridging several RNA helices of the 16S rRNA. Functionally, forms an intersubunit bridge (bridge B4) with the 23S rRNA of the 50S subunit in the ribosome. In Exiguobacterium sibiricum (strain DSM 17290 / CCUG 55495 / CIP 109462 / JCM 13490 / 255-15), this protein is Small ribosomal subunit protein uS15.